Here is an 89-residue protein sequence, read N- to C-terminus: Small ribosomal subunit protein uS17 (89 aa).

It belongs to the universal ribosomal protein uS17 family. In terms of assembly, part of the 30S ribosomal subunit.

Functionally, one of the primary rRNA binding proteins, it binds specifically to the 5'-end of 16S ribosomal RNA. The protein is Small ribosomal subunit protein uS17 of Leptospira interrogans serogroup Icterohaemorrhagiae serovar Lai (strain 56601).